A 364-amino-acid chain; its full sequence is Fructose-bisphosphate aldolase A (364 aa).

Residue tyrosine 5 is modified to Phosphotyrosine. Threonine 9 carries the post-translational modification Phosphothreonine. Phosphoserine is present on residues serine 36 and serine 39. Residue lysine 42 is modified to N6-acetyllysine; alternate. Lysine 42 is covalently cross-linked (Glycyl lysine isopeptide (Lys-Gly) (interchain with G-Cter in SUMO1); alternate). Lysine 42 participates in a covalent cross-link: Glycyl lysine isopeptide (Lys-Gly) (interchain with G-Cter in SUMO2); alternate. Arginine 43 is a binding site for beta-D-fructose 1,6-bisphosphate. Serine 46 carries the phosphoserine modification. Lysine 99 is subject to N6-(2-hydroxyisobutyryl)lysine. The residue at position 108 (lysine 108) is an N6-acetyllysine. Lysine 111 is modified (N6-acetyllysine; alternate). At lysine 111 the chain carries N6-malonyllysine; alternate. At serine 132 the chain carries Phosphoserine. The residue at position 147 (lysine 147) is an N6-(2-hydroxyisobutyryl)lysine. Glutamate 188 functions as the Proton acceptor in the catalytic mechanism. The active-site Schiff-base intermediate with dihydroxyacetone-P is the lysine 230. Serine 272 carries the post-translational modification Phosphoserine. Residues 272 to 274, serine 301, and arginine 304 each bind beta-D-fructose 1,6-bisphosphate; that span reads SGG. Lysine 312 is subject to N6-malonyllysine. N6-acetyllysine is present on lysine 330.

It belongs to the class I fructose-bisphosphate aldolase family. As to quaternary structure, homotetramer. Interacts with SNX9 and WAS. Interacts with FBP2; the interaction blocks FBP2 inhibition by physiological concentrations of AMP and reduces inhibition by Ca(2+).

The protein localises to the cytoplasm. The protein resides in the myofibril. It localises to the sarcomere. Its subcellular location is the i band. It is found in the m line. The catalysed reaction is beta-D-fructose 1,6-bisphosphate = D-glyceraldehyde 3-phosphate + dihydroxyacetone phosphate. Its pathway is carbohydrate degradation; glycolysis; D-glyceraldehyde 3-phosphate and glycerone phosphate from D-glucose: step 4/4. In terms of biological role, catalyzes the reversible conversion of beta-D-fructose 1,6-bisphosphate (FBP) into two triose phosphate and plays a key role in glycolysis and gluconeogenesis. In addition, may also function as scaffolding protein. This is Fructose-bisphosphate aldolase A from Homo sapiens (Human).